The primary structure comprises 132 residues: UPF0299 membrane protein YohJ (132 aa).

4 consecutive transmembrane segments (helical) span residues 7–27, 31–51, 63–83, and 93–113; these read IIWQYIRAFVLIYACLYAGIF, LLPITIPGSIIGMLILFVLLA, GCYVLIRYMALLFVPIGVGVM, and FGPVVVSCAISTLVVFVVVSW.

This sequence belongs to the UPF0299 family.

It localises to the cell inner membrane. This Salmonella agona (strain SL483) protein is UPF0299 membrane protein YohJ.